A 130-amino-acid polypeptide reads, in one-letter code: MAKVQYMGTGRRKKSVARVRLVPGSGKVLVNKREIENFFGLETLRVIVNQPLVLTGTKDRFDVLVNVHGGGFTGQAGAIRHGIARALVKSDEALKPELKKAGFLTRDPRMKERKKYGLKAARRAPQFSKR.

The protein belongs to the universal ribosomal protein uS9 family.

The sequence is that of Small ribosomal subunit protein uS9 from Clostridium beijerinckii (strain ATCC 51743 / NCIMB 8052) (Clostridium acetobutylicum).